Consider the following 265-residue polypeptide: Mycothiol acetyltransferase (265 aa).

N-acetyltransferase domains follow at residues methionine 1 to proline 110 and valine 118 to glycine 265. 1D-myo-inositol 2-(L-cysteinylamino)-2-deoxy-alpha-D-glucopyranoside is bound at residue aspartate 3. Valine 44–valine 46 is an acetyl-CoA binding site. Residues glutamate 145, arginine 185, and glutamate 198 each contribute to the 1D-myo-inositol 2-(L-cysteinylamino)-2-deoxy-alpha-D-glucopyranoside site. Acetyl-CoA-binding positions include leucine 202 to valine 204 and histidine 209 to lysine 215. Position 236 (tyrosine 236) interacts with 1D-myo-inositol 2-(L-cysteinylamino)-2-deoxy-alpha-D-glucopyranoside.

This sequence belongs to the acetyltransferase family. MshD subfamily. As to quaternary structure, monomer.

It carries out the reaction 1D-myo-inositol 2-(L-cysteinylamino)-2-deoxy-alpha-D-glucopyranoside + acetyl-CoA = mycothiol + CoA + H(+). In terms of biological role, catalyzes the transfer of acetyl from acetyl-CoA to desacetylmycothiol (Cys-GlcN-Ins) to form mycothiol. This chain is Mycothiol acetyltransferase, found in Segniliparus rotundus (strain ATCC BAA-972 / CDC 1076 / CIP 108378 / DSM 44985 / JCM 13578).